We begin with the raw amino-acid sequence, 258 residues long: MLRKVFAVVSVLLVVSAAKVTKLVLDDHYVNRVVGGEVAKNGSAPYQVSLQVPGWGHNCGGSLLNNRWVLTAAHCLVGYEPSDLMVLVGTNSLKEGGELLKVDKLLYHSRYNRPQFHNDIGLMRLEQPVQFSELVQSVEYLEKAVPVNATVRLTGWGRTSTNGNVPTLLQSLNVVTLSNEDCKAKMGNPKNVDLGHVCTLTKAGEGACNGDSGGPLVYEGKLVGVVNFGVPCGRGFPDGFARVSYYHEWVRTTMANNS.

An N-terminal signal peptide occupies residues 1-17 (MLRKVFAVVSVLLVVSA). A propeptide spans 18-32 (AKVTKLVLDDHYVNR) (activation peptide). One can recognise a Peptidase S1 domain in the interval 33–255 (VVGGEVAKNG…YHEWVRTTMA (223 aa)). Cys59 and Cys75 form a disulfide bridge. Residues His74 and Asp119 each act as charge relay system in the active site. 2 cysteine pairs are disulfide-bonded: Cys182–Cys198 and Cys208–Cys232. Ser212 acts as the Charge relay system in catalysis.

Belongs to the peptidase S1 family. After blood feeding, expression is induced in the midgut epithelium, followed by secretion into the midgut lumen.

It is found in the secreted. The enzyme catalyses Preferential cleavage: Tyr-|-Xaa, Trp-|-Xaa, Phe-|-Xaa, Leu-|-Xaa.. The polypeptide is Chymotrypsin-2 (CHYM2) (Anopheles gambiae (African malaria mosquito)).